The chain runs to 156 residues: Small ribosomal subunit protein uS7 (156 aa).

Belongs to the universal ribosomal protein uS7 family. Part of the 30S ribosomal subunit. Contacts proteins S9 and S11.

Its function is as follows. One of the primary rRNA binding proteins, it binds directly to 16S rRNA where it nucleates assembly of the head domain of the 30S subunit. Is located at the subunit interface close to the decoding center, probably blocks exit of the E-site tRNA. The sequence is that of Small ribosomal subunit protein uS7 from Rhizobium leguminosarum bv. trifolii (strain WSM2304).